Here is a 335-residue protein sequence, read N- to C-terminus: Transaldolase (335 aa).

The active-site Schiff-base intermediate with substrate is the K135.

It belongs to the transaldolase family. Type 1 subfamily. Homodimer.

The protein localises to the cytoplasm. The catalysed reaction is D-sedoheptulose 7-phosphate + D-glyceraldehyde 3-phosphate = D-erythrose 4-phosphate + beta-D-fructose 6-phosphate. It functions in the pathway carbohydrate degradation; pentose phosphate pathway; D-glyceraldehyde 3-phosphate and beta-D-fructose 6-phosphate from D-ribose 5-phosphate and D-xylulose 5-phosphate (non-oxidative stage): step 2/3. In terms of biological role, transaldolase is important for the balance of metabolites in the pentose-phosphate pathway. The chain is Transaldolase from Prochlorococcus marinus (strain SARG / CCMP1375 / SS120).